The primary structure comprises 1219 residues: Pheromone-regulated membrane protein 10 (1219 aa).

Positions 1–11 (MMRTQSDEHVA) are enriched in basic and acidic residues. 4 disordered regions span residues 1–273 (MMRT…IERE), 303–490 (LASF…DPFT), 503–533 (HDDD…EDYV), and 555–713 (EGNK…RPVK). Over residues 42–53 (DENDDGHDDSDE) the composition is skewed to acidic residues. Over residues 57–68 (SVVIPTPSVVIV) the composition is skewed to low complexity. Residues 104–115 (LKSPGTPTTYSP) show a composition bias toward polar residues. Residues 136 to 155 (GSSLSSTTLMNTLLNSSGLG) are compositionally biased toward low complexity. Composition is skewed to acidic residues over residues 159–171 (TESE…DEEV) and 219–231 (QEEE…DDDG). Basic and acidic residues-rich tracts occupy residues 259 to 273 (ADRA…IERE), 330 to 346 (DDQR…RREN), and 395 to 421 (LDRR…EKER). The span at 422-432 (QHHHHNHHHHH) shows a compositional bias: basic residues. The segment covering 435-446 (ETGPNTGASSPF) has biased composition (polar residues). The segment covering 448-470 (EEEKDREAEEAEILRDQARDLVN) has biased composition (basic and acidic residues). The span at 565–577 (TTVGDGTSTGDVS) shows a compositional bias: low complexity. A compositionally biased stretch (basic residues) spans 598-615 (KSKTKTTQKLGLKKKKKE). The segment covering 616–641 (LLKIIEDQRKEKEENKKRPKWYDKSR) has biased composition (basic and acidic residues). Low complexity predominate over residues 642–652 (STSPSPGGTPA). Residues 653–673 (PHHHHHIPGLHLHHHTKGHQR) show a composition bias toward basic residues. The segment covering 693-713 (GGDKPPDRPRSLRSEALRPVK) has biased composition (basic and acidic residues). The next 10 membrane-spanning stretches (helical) occupy residues 864-884 (PPWL…PYAF), 888-908 (WADI…QIIV), 918-938 (VFEV…GTIS), 945-965 (FCFA…YIVL), 983-1003 (MFYA…GAVV), 1021-1041 (LDPL…ALVN), 1049-1069 (PSML…GANI), 1075-1095 (SSYL…NLYS), 1100-1120 (GLAF…GVAS), and 1184-1204 (LGFT…AATL).

This sequence belongs to the ThrE exporter (TC 2.A.79) family.

The protein resides in the membrane. The chain is Pheromone-regulated membrane protein 10 from Yarrowia lipolytica (strain CLIB 122 / E 150) (Yeast).